Reading from the N-terminus, the 425-residue chain is Putative type I restriction enzyme MjaX specificity subunit (425 aa).

Belongs to the type-I restriction system S methylase family.

In terms of biological role, a putative specificity (S) subunit of a type I restriction enzyme thought to recognize 5'-TAGN(6)TGC-3'; the other subunits are unknown. This Methanocaldococcus jannaschii (strain ATCC 43067 / DSM 2661 / JAL-1 / JCM 10045 / NBRC 100440) (Methanococcus jannaschii) protein is Putative type I restriction enzyme MjaX specificity subunit.